The following is a 702-amino-acid chain: Ribosomal RNA large subunit methyltransferase K/L (702 aa).

Positions 43 to 154 constitute a THUMP domain; that stretch reads LIYQSLMWSR…KETASIALDL (112 aa).

It belongs to the methyltransferase superfamily. RlmKL family.

The protein localises to the cytoplasm. It catalyses the reaction guanosine(2445) in 23S rRNA + S-adenosyl-L-methionine = N(2)-methylguanosine(2445) in 23S rRNA + S-adenosyl-L-homocysteine + H(+). The catalysed reaction is guanosine(2069) in 23S rRNA + S-adenosyl-L-methionine = N(2)-methylguanosine(2069) in 23S rRNA + S-adenosyl-L-homocysteine + H(+). Specifically methylates the guanine in position 2445 (m2G2445) and the guanine in position 2069 (m7G2069) of 23S rRNA. This Salmonella schwarzengrund (strain CVM19633) protein is Ribosomal RNA large subunit methyltransferase K/L.